The primary structure comprises 258 residues: 6-phosphogluconolactonase (258 aa).

Alanine 2 is subject to N-acetylalanine. Serine 49 carries the post-translational modification Phosphoserine. The residue at position 180 (lysine 180) is an N6-acetyllysine.

The protein belongs to the glucosamine/galactosamine-6-phosphate isomerase family. 6-phosphogluconolactonase subfamily.

Its subcellular location is the cytoplasm. It catalyses the reaction 6-phospho-D-glucono-1,5-lactone + H2O = 6-phospho-D-gluconate + H(+). It functions in the pathway carbohydrate degradation; pentose phosphate pathway; D-ribulose 5-phosphate from D-glucose 6-phosphate (oxidative stage): step 2/3. Functionally, hydrolysis of 6-phosphogluconolactone to 6-phosphogluconate. This is 6-phosphogluconolactonase (PGLS) from Bos taurus (Bovine).